The chain runs to 310 residues: Low affinity immunoglobulin gamma Fc region receptor II-b (310 aa).

A signal peptide spans 1 to 42 (MGILSFLPVLATESDWADCKSPQPWGHMLLWTAVLFLAPVAG). Over 43-217 (TPAAPPKAVL…KPVTITVQAP (175 aa)) the chain is Extracellular. Ig-like C2-type domains follow at residues 48–127 (PKAV…VHLT) and 131–213 (EWLV…VTIT). Intrachain disulfides connect cysteine 71/cysteine 113 and cysteine 152/cysteine 196. 3 N-linked (GlcNAc...) asparagine glycosylation sites follow: asparagine 106, asparagine 180, and asparagine 187. A helical transmembrane segment spans residues 218-240 (SSSPMGIIVAVVTGIAVAAIVAA). Topologically, residues 241-310 (VVALIYCRKK…LEEPDDQNRI (70 aa)) are cytoplasmic. An ITIM motif motif is present at residues 290–295 (ITYSLL). Tyrosine 292 is modified (phosphotyrosine; by SRC-type Tyr-kinases).

As to quaternary structure, interacts with INPP5D/SHIP1. Interacts with FGR. Interacts with LYN. (Microbial infection) Isoform IIB1 interacts with measles virus protein N. Protein N is released in the blood following lysis of measles infected cells. This interaction presumably block inflammatory immune response. In terms of processing, phosphorylated by the SRC-type Tyr-kinases LYN and BLK. Is the most broadly distributed Fc-gamma-receptor. Expressed in monocyte, neutrophils, macrophages, basophils, eosinophils, Langerhans cells, B-cells, platelets cells and placenta (endothelial cells). Not detected in natural killer cells.

It localises to the cell membrane. In terms of biological role, receptor for the Fc region of complexed or aggregated immunoglobulins gamma. Low affinity receptor. Involved in a variety of effector and regulatory functions such as phagocytosis of immune complexes and modulation of antibody production by B-cells. Binding to this receptor results in down-modulation of previous state of cell activation triggered via antigen receptors on B-cells (BCR), T-cells (TCR) or via another Fc receptor. Isoform IIB1 fails to mediate endocytosis or phagocytosis. Isoform IIB2 does not trigger phagocytosis. The sequence is that of Low affinity immunoglobulin gamma Fc region receptor II-b (FCGR2B) from Homo sapiens (Human).